Consider the following 225-residue polypeptide: Transmembrane protein 225 (225 aa).

The Cytoplasmic segment spans residues 1-8 (MVHVSNRS). A helical membrane pass occupies residues 9 to 29 (IQGMNILFSSWAVVLMVMGIT). Topologically, residues 30-72 (LDKWVELISEDERAKMNHSPWMMCCPALWPEDDLKVVRIMMTS) are extracellular. The helical transmembrane segment at 73-93 (SLGLSFLLNLILGMKFTYLIP) threads the bilayer. At 94-99 (QNKYIQ) the chain is on the cytoplasmic side. A helical membrane pass occupies residues 100 to 120 (LFTTILSFFSGISLLWALILY). The Extracellular portion of the chain corresponds to 121-136 (HNKLKQGQSMHFSSYR). Residues 137 to 157 (ITWIMYTAYLNVFFLSVCGVL) traverse the membrane as a helical segment. Residues 158 to 225 (SLLECKLSTS…VQTRHVTWAL (68 aa)) lie on the Cytoplasmic side of the membrane. The RVxF signature appears at 219–223 (RHVTW).

Interacts (via RVxF motif) with PPP1CC.

It is found in the cytoplasmic vesicle. Its subcellular location is the secretory vesicle. It localises to the acrosome membrane. Its function is as follows. Probably inhibits protein phosphatase 1 (PP1) in sperm via binding to catalytic subunit PPP1CC. The sequence is that of Transmembrane protein 225 (TMEM225) from Homo sapiens (Human).